The following is a 72-amino-acid chain: Delta-actitoxin-Avd2b 1 (72 aa).

A signal peptide spans 1–21 (MMNRLLVFLMLGAAFMLVVSA). The propeptide occupies 22-42 (NDAYGDEPAFKDLNQGDESLG). Intrachain disulfides connect C47/C62, C48/C56, and C50/C67.

Belongs to the sea anemone short toxin (type III) family.

It is found in the secreted. It localises to the nematocyst. In terms of biological role, voltage-gated sodium channel (Nav) inhibitor. 1 uM completely inhibits insect voltage-gated sodium channel inactivation (DmNav1 from D.melanogaster). This Anemonia viridis (Snakelocks anemone) protein is Delta-actitoxin-Avd2b 1.